Reading from the N-terminus, the 1598-residue chain is Serine/threonine-protein kinase Nek1 (1598 aa).

The Protein kinase domain maps to 106-380 (YEVIRQIGAG…ALQCLGYTIF (275 aa)). ATP is bound by residues 112-120 (IGAGRFGEV) and K135. Catalysis depends on D240, which acts as the Proton acceptor.

Belongs to the protein kinase superfamily. NEK Ser/Thr protein kinase family. NIMA subfamily.

Its subcellular location is the cytoplasm. It localises to the cytoskeleton. It is found in the microtubule organizing center. The protein localises to the centrosome. The protein resides in the spindle pole. It carries out the reaction L-seryl-[protein] + ATP = O-phospho-L-seryl-[protein] + ADP + H(+). The enzyme catalyses L-threonyl-[protein] + ATP = O-phospho-L-threonyl-[protein] + ADP + H(+). With respect to regulation, phosphorylation status of the T-loop (amino acids 267-293) modulates kinase activity and subcellular localization of the protein. Probable serine/threonine-protein kinase. Involved in controlling centrosome splitting. Promotes separation of the centrosome outer cores. The polypeptide is Serine/threonine-protein kinase Nek1 (Toxoplasma gondii (strain ATCC 50611 / Me49)).